The sequence spans 193 residues: Potassium-transporting ATPase KdpC subunit (193 aa).

The chain crosses the membrane as a helical span at residues 14-34 (ITFTFLVLCGLVYPLIVTGIA).

This sequence belongs to the KdpC family. As to quaternary structure, the system is composed of three essential subunits: KdpA, KdpB and KdpC.

Its subcellular location is the cell membrane. Functionally, part of the high-affinity ATP-driven potassium transport (or Kdp) system, which catalyzes the hydrolysis of ATP coupled with the electrogenic transport of potassium into the cytoplasm. This subunit acts as a catalytic chaperone that increases the ATP-binding affinity of the ATP-hydrolyzing subunit KdpB by the formation of a transient KdpB/KdpC/ATP ternary complex. The sequence is that of Potassium-transporting ATPase KdpC subunit from Bacillus thuringiensis subsp. konkukian (strain 97-27).